We begin with the raw amino-acid sequence, 333 residues long: Probable tRNA pseudouridine synthase B (333 aa).

The Nucleophile role is filled by Asp-71. A PUA domain is found at 238–313; the sequence is LPKIWVRDSA…LVARTDRVVM (76 aa).

The protein belongs to the pseudouridine synthase TruB family. Type 2 subfamily.

It carries out the reaction uridine(55) in tRNA = pseudouridine(55) in tRNA. Its function is as follows. Could be responsible for synthesis of pseudouridine from uracil-55 in the psi GC loop of transfer RNAs. The chain is Probable tRNA pseudouridine synthase B from Pyrobaculum calidifontis (strain DSM 21063 / JCM 11548 / VA1).